Consider the following 277-residue polypeptide: Bifunctional protein FolD (277 aa).

Residues 164 to 166 (GRS), S189, and T230 each bind NADP(+).

It belongs to the tetrahydrofolate dehydrogenase/cyclohydrolase family. In terms of assembly, homodimer.

It carries out the reaction (6R)-5,10-methylene-5,6,7,8-tetrahydrofolate + NADP(+) = (6R)-5,10-methenyltetrahydrofolate + NADPH. It catalyses the reaction (6R)-5,10-methenyltetrahydrofolate + H2O = (6R)-10-formyltetrahydrofolate + H(+). The protein operates within one-carbon metabolism; tetrahydrofolate interconversion. Its function is as follows. Catalyzes the oxidation of 5,10-methylenetetrahydrofolate to 5,10-methenyltetrahydrofolate and then the hydrolysis of 5,10-methenyltetrahydrofolate to 10-formyltetrahydrofolate. The sequence is that of Bifunctional protein FolD from Clostridium perfringens (strain ATCC 13124 / DSM 756 / JCM 1290 / NCIMB 6125 / NCTC 8237 / Type A).